Here is a 72-residue protein sequence, read N- to C-terminus: Bradykinin-potentiating peptide BmKbpp (72 aa).

A signal peptide spans 1–22; sequence MNKKTLLVIFFVTMLIVDEVNS. Positions 70 to 72 are excised as a propeptide; that stretch reads RRR.

Belongs to the non-disulfide-bridged peptide (NDBP) superfamily. Long chain multifunctional peptide (group 2) family. Expressed by the venom gland.

It is found in the secreted. In terms of biological role, amphipathic peptide that shows bradykinin potentiating activity and antimicrobial activities against bacteria and fungi. Has higher antibacterial activities against Gram-negative than against Gram-positive bacteria. Also inhibits NADPH oxidase-dependent superoxide production (IC(50) is 0.4 uM on granulocytes stimulated with PMA, IC(50) is 0.51 uM on HL-60 cells undifferentiated and IC(50) is 0.53 uM on HL-60 cells treated with DMSO). The C-terminal peptide shows a higher bradykinin potentiating activity than the complete peptide. The sequence is that of Bradykinin-potentiating peptide BmKbpp from Olivierus martensii (Manchurian scorpion).